Consider the following 249-residue polypeptide: Metallo-beta-lactamase type 2 (249 aa).

A signal peptide spans 1-18 (MKTVFILISMLFPVAVMA). Positions 99, 101, 103, 162, and 181 each coordinate Zn(2+). Lys184 and Asn193 together coordinate substrate. Residue His223 participates in Zn(2+) binding.

It belongs to the metallo-beta-lactamase superfamily. Class-B beta-lactamase family. Monomer. It depends on Zn(2+) as a cofactor.

Its subcellular location is the periplasm. It catalyses the reaction a beta-lactam + H2O = a substituted beta-amino acid. Competitively inhibited by 4-morpholineethanesulfonic acid (MES), SB236050 and biphenyl tetrazoles (BPTs). Also inhibited by chelating agents such as EDTA and 1,10-phenanthroline. CcrA is not susceptible to inactivation by the beta-lactamase-blocking agents clavulanic acid or tazobactam. Its function is as follows. Confers resistance to the different beta-lactams antibiotics (penicillin, cephalosporin and carbapenem) via the hydrolysis of the beta-lactam ring. This is Metallo-beta-lactamase type 2 from Bacteroides fragilis.